Consider the following 473-residue polypeptide: Isocitrate dehydrogenase [NADP] (473 aa).

Threonine 104 contributes to the NADP(+) binding site. D-threo-isocitrate-binding residues include serine 113, asparagine 115, arginine 119, arginine 129, and arginine 153. Aspartate 362 serves as a coordination point for Mg(2+). NADP(+) contacts are provided by residues 394-400 (HGTAPKH), asparagine 407, tyrosine 446, and arginine 450.

This sequence belongs to the isocitrate and isopropylmalate dehydrogenases family. In terms of assembly, homodimer. Requires Mg(2+) as cofactor. Mn(2+) is required as a cofactor.

It catalyses the reaction D-threo-isocitrate + NADP(+) = 2-oxoglutarate + CO2 + NADPH. Inhibited by either oxaloacetate or glyoxylate. Also inhibited by the adenine nucleotides AMP, ADP and ATP and by NADPH, which inhibits the activity by 28% when it is added to the assay mixture at 0.25 mM. Catalyzes the oxidative decarboxylation of isocitrate to 2-oxoglutarate and carbon dioxide with the concomitant reduction of NADP(+). This Nostoc sp. (strain PCC 7120 / SAG 25.82 / UTEX 2576) protein is Isocitrate dehydrogenase [NADP].